A 423-amino-acid polypeptide reads, in one-letter code: Serine--tRNA ligase (423 aa).

231 to 233 contributes to the L-serine binding site; the sequence is TGE. Residue 262-264 participates in ATP binding; sequence RQE. Residue glutamate 285 participates in L-serine binding. 349–352 provides a ligand contact to ATP; that stretch reads EISS. Serine 385 is an L-serine binding site.

It belongs to the class-II aminoacyl-tRNA synthetase family. Type-1 seryl-tRNA synthetase subfamily. Homodimer. The tRNA molecule binds across the dimer.

The protein resides in the cytoplasm. The enzyme catalyses tRNA(Ser) + L-serine + ATP = L-seryl-tRNA(Ser) + AMP + diphosphate + H(+). It catalyses the reaction tRNA(Sec) + L-serine + ATP = L-seryl-tRNA(Sec) + AMP + diphosphate + H(+). It participates in aminoacyl-tRNA biosynthesis; selenocysteinyl-tRNA(Sec) biosynthesis; L-seryl-tRNA(Sec) from L-serine and tRNA(Sec): step 1/1. Catalyzes the attachment of serine to tRNA(Ser). Is also able to aminoacylate tRNA(Sec) with serine, to form the misacylated tRNA L-seryl-tRNA(Sec), which will be further converted into selenocysteinyl-tRNA(Sec). This is Serine--tRNA ligase from Phytoplasma mali (strain AT).